The sequence spans 230 residues: 5'-methylthioadenosine/S-adenosylhomocysteine nucleosidase (230 aa).

The active-site Proton acceptor is glutamate 12. Substrate is bound by residues glycine 78, isoleucine 153, and 174–175 (ME). Aspartate 198 serves as the catalytic Proton donor.

Belongs to the PNP/UDP phosphorylase family. MtnN subfamily.

The enzyme catalyses S-adenosyl-L-homocysteine + H2O = S-(5-deoxy-D-ribos-5-yl)-L-homocysteine + adenine. The catalysed reaction is S-methyl-5'-thioadenosine + H2O = 5-(methylsulfanyl)-D-ribose + adenine. It carries out the reaction 5'-deoxyadenosine + H2O = 5-deoxy-D-ribose + adenine. It participates in amino-acid biosynthesis; L-methionine biosynthesis via salvage pathway; S-methyl-5-thio-alpha-D-ribose 1-phosphate from S-methyl-5'-thioadenosine (hydrolase route): step 1/2. In terms of biological role, catalyzes the irreversible cleavage of the glycosidic bond in both 5'-methylthioadenosine (MTA) and S-adenosylhomocysteine (SAH/AdoHcy) to adenine and the corresponding thioribose, 5'-methylthioribose and S-ribosylhomocysteine, respectively. Also cleaves 5'-deoxyadenosine, a toxic by-product of radical S-adenosylmethionine (SAM) enzymes, into 5-deoxyribose and adenine. The polypeptide is 5'-methylthioadenosine/S-adenosylhomocysteine nucleosidase (Shewanella frigidimarina (strain NCIMB 400)).